A 97-amino-acid polypeptide reads, in one-letter code: MSSGTPTPSNVVLIGKKPVMNYVLAALTLLNQGVSEIVIKARGRAISKAVDTVEIVRNRFLPDKIEIKEIRVGSQVVTSQDGRQSRVSTIEIAIRKK.

The residue at position 2 (serine 2) is an N-acetylserine; by ard1 acetylase. Positions 16, 17, and 22 each coordinate RNA. At lysine 16 the chain carries N6,N6,N6-trimethyllysine; alternate. The residue at position 16 (lysine 16) is an N6,N6-dimethyllysine; alternate. Position 16 is an N6-acetyllysine; alternate (lysine 16). An N6-methyllysine; alternate modification is found at lysine 16. Asparagine 31 carries the deamidated asparagine; partial modification. The residue at position 32 (glutamine 32) is a Deamidated glutamine; partial. Lysine 40 carries the post-translational modification N6-methyllysine; partial. 2 residues coordinate RNA: arginine 42 and arginine 44. The residue at position 48 (lysine 48) is an N6-acetyllysine; partial. Position 51 is an aspartate methyl ester; partial (aspartate 51). Asparagine 58 carries the post-translational modification Deamidated asparagine; partial. Lysine 64 carries the N6-acetyllysine; alternate; partial modification. At lysine 64 the chain carries N6-methyllysine; alternate; partial. Residue lysine 68 is modified to N6-acetyllysine; partial. An N5-methylglutamine; partial modification is found at glutamine 75. Aspartate 81 carries the post-translational modification Aspartate methyl ester; partial. Residue lysine 97 is modified to N6-methyllysine; partial.

This sequence belongs to the histone-like Alba family. As to quaternary structure, forms homodimers and higher order oligomers, e.g. homotetramers. Post-translationally, acetylated. Acetylation at Lys-16 by the Pat acetylase decreases DNA-binding affinity. Deacetylation at Lys-16 by the CobB deacetylase increases DNA-binding affinity. Acetylation at Ser-2 is involved in the regulation of the turnover of the protein.

It is found in the cytoplasm. The protein resides in the chromosome. Its function is as follows. Binds double-stranded DNA tightly but without sequence specificity. Involved in DNA compaction. Possesses DNA endonuclease activity. Prevents transcription after DNA binding. Binds single-stranded DNA and RNA in vitro. Binds rRNA and mRNA in vivo. May play a role in maintaining the structural and functional stability of RNA, and, perhaps, ribosomes. Binds double-stranded RNA (dsRNA) and exhibits RNA chaperone activity. Required for normal growth. The chain is DNA/RNA-binding protein Alba 1 from Saccharolobus islandicus (strain REY15A) (Sulfolobus islandicus).